We begin with the raw amino-acid sequence, 72 residues long: Translational regulator CsrA (72 aa).

This sequence belongs to the CsrA/RsmA family. In terms of assembly, homodimer; the beta-strands of each monomer intercalate to form a hydrophobic core, while the alpha-helices form wings that extend away from the core.

The protein resides in the cytoplasm. In terms of biological role, a translational regulator that binds mRNA to regulate translation initiation and/or mRNA stability. Usually binds in the 5'-UTR at or near the Shine-Dalgarno sequence preventing ribosome-binding, thus repressing translation. Its main target seems to be the major flagellin gene, while its function is anatagonized by FliW. The chain is Translational regulator CsrA from Agathobacter rectalis (strain ATCC 33656 / DSM 3377 / JCM 17463 / KCTC 5835 / VPI 0990) (Eubacterium rectale).